A 75-amino-acid chain; its full sequence is UPF0352 protein YejL (75 aa).

The protein belongs to the UPF0352 family.

The sequence is that of UPF0352 protein YejL from Salmonella agona (strain SL483).